A 295-amino-acid polypeptide reads, in one-letter code: Bifunctional protein FolD (295 aa).

NADP(+) contacts are provided by residues 163 to 165 (GRS), Ser-188, and Ile-229.

It belongs to the tetrahydrofolate dehydrogenase/cyclohydrolase family. In terms of assembly, homodimer.

The enzyme catalyses (6R)-5,10-methylene-5,6,7,8-tetrahydrofolate + NADP(+) = (6R)-5,10-methenyltetrahydrofolate + NADPH. It carries out the reaction (6R)-5,10-methenyltetrahydrofolate + H2O = (6R)-10-formyltetrahydrofolate + H(+). It functions in the pathway one-carbon metabolism; tetrahydrofolate interconversion. Its function is as follows. Catalyzes the oxidation of 5,10-methylenetetrahydrofolate to 5,10-methenyltetrahydrofolate and then the hydrolysis of 5,10-methenyltetrahydrofolate to 10-formyltetrahydrofolate. This chain is Bifunctional protein FolD, found in Hyphomonas neptunium (strain ATCC 15444).